Consider the following 201-residue polypeptide: Large ribosomal subunit protein uL4 (201 aa).

Residues 43 to 73 (TRAQKTRSEVSGGGAKPWRQKGTGRARAGTT) are disordered.

It belongs to the universal ribosomal protein uL4 family. As to quaternary structure, part of the 50S ribosomal subunit.

One of the primary rRNA binding proteins, this protein initially binds near the 5'-end of the 23S rRNA. It is important during the early stages of 50S assembly. It makes multiple contacts with different domains of the 23S rRNA in the assembled 50S subunit and ribosome. In terms of biological role, forms part of the polypeptide exit tunnel. This Colwellia psychrerythraea (strain 34H / ATCC BAA-681) (Vibrio psychroerythus) protein is Large ribosomal subunit protein uL4.